The sequence spans 255 residues: uncharacterized protein (255 aa).

Positions methionine 1–valine 10 are enriched in basic residues. Residues methionine 1–glutamate 78 are disordered. Basic and acidic residues predominate over residues valine 44 to glutamine 61.

This is an uncharacterized protein from Arabidopsis thaliana (Mouse-ear cress).